Reading from the N-terminus, the 31-residue chain is Cytochrome b6-f complex subunit 6 (31 aa).

The helical transmembrane segment at 4-24 (VISYFGFLLVALAFTLVTYLG) threads the bilayer.

The protein belongs to the PetL family. The 4 large subunits of the cytochrome b6-f complex are cytochrome b6, subunit IV (17 kDa polypeptide, PetD), cytochrome f and the Rieske protein, while the 4 small subunits are PetG, PetL, PetM and PetN. The complex functions as a dimer.

Its subcellular location is the plastid. The protein localises to the chloroplast thylakoid membrane. Functionally, component of the cytochrome b6-f complex, which mediates electron transfer between photosystem II (PSII) and photosystem I (PSI), cyclic electron flow around PSI, and state transitions. PetL is important for photoautotrophic growth as well as for electron transfer efficiency and stability of the cytochrome b6-f complex. This is Cytochrome b6-f complex subunit 6 from Nephroselmis olivacea (Green alga).